The chain runs to 529 residues: AT hook-containing protein attf-4 (529 aa).

Disordered regions lie at residues M1–D39, Q131–E158, G173–P200, and V233–E255. 2 stretches are compositionally biased toward polar residues: residues S19–N31 and Q138–N153. Basic and acidic residues predominate over residues I179–R189. Residues V233 to G248 show a composition bias toward low complexity. Positions G307–E319 form a DNA-binding region, a.T hook. The tract at residues L436–Q476 is disordered. Over residues A443–T455 the composition is skewed to low complexity. The span at V458–E469 shows a compositional bias: basic and acidic residues.

The sequence is that of AT hook-containing protein attf-4 from Caenorhabditis elegans.